A 313-amino-acid chain; its full sequence is Homoserine O-succinyltransferase (313 aa).

Cys-142 (acyl-thioester intermediate) is an active-site residue. Substrate is bound by residues Lys-163 and Ser-192. His-235 acts as the Proton acceptor in catalysis. The active site involves Glu-237. Residue Arg-249 participates in substrate binding.

This sequence belongs to the MetA family.

The protein resides in the cytoplasm. The catalysed reaction is L-homoserine + succinyl-CoA = O-succinyl-L-homoserine + CoA. It functions in the pathway amino-acid biosynthesis; L-methionine biosynthesis via de novo pathway; O-succinyl-L-homoserine from L-homoserine: step 1/1. In terms of biological role, transfers a succinyl group from succinyl-CoA to L-homoserine, forming succinyl-L-homoserine. This is Homoserine O-succinyltransferase from Vibrio atlanticus (strain LGP32) (Vibrio splendidus (strain Mel32)).